A 310-amino-acid chain; its full sequence is NAD-dependent protein deacylase sirtuin-5, mitochondrial (310 aa).

The transit peptide at 1–36 directs the protein to the mitochondrion; the sequence is MQPLQIAPCRLLYGLYRGLKSPASTGTRICPAMARP. The 271-residue stretch at 37–307 folds into the Deacetylase sirtuin-type domain; the sequence is SSNMADFRKL…PEALAPHETG (271 aa). 58–77 provides a ligand contact to NAD(+); it reads GAGVSAESGVPTFRGAGGYW. Residues Tyr102 and Arg105 each contribute to the substrate site. An NAD(+)-binding site is contributed by 140-143; that stretch reads QNID. The active-site Proton acceptor is His158. Positions 166, 169, 207, and 212 each coordinate Zn(2+). NAD(+) contacts are provided by residues 249–251, 275–277, and Cys293; these read GTS and NME.

It belongs to the sirtuin family. Class III subfamily. Monomer. Homodimer. Interacts with CPS1. Interacts with PCCA. Requires Zn(2+) as cofactor.

It is found in the mitochondrion. The protein localises to the cytoplasm. It localises to the cytosol. The protein resides in the nucleus. It carries out the reaction N(6)-malonyl-L-lysyl-[protein] + NAD(+) + H2O = 2''-O-malonyl-ADP-D-ribose + nicotinamide + L-lysyl-[protein]. The catalysed reaction is N(6)-succinyl-L-lysyl-[protein] + NAD(+) + H2O = 2''-O-succinyl-ADP-D-ribose + nicotinamide + L-lysyl-[protein]. The enzyme catalyses N(6)-glutaryl-L-lysyl-[protein] + NAD(+) + H2O = 2''-O-glutaryl-ADP-D-ribose + nicotinamide + L-lysyl-[protein]. Its function is as follows. NAD-dependent lysine demalonylase, desuccinylase and deglutarylase that specifically removes malonyl, succinyl and glutaryl groups on target proteins. Activates CPS1 and contributes to the regulation of blood ammonia levels during prolonged fasting: acts by mediating desuccinylation and deglutarylation of CPS1, thereby increasing CPS1 activity in response to elevated NAD levels during fasting. Activates SOD1 by mediating its desuccinylation, leading to reduced reactive oxygen species. Activates SHMT2 by mediating its desuccinylation. Modulates ketogenesis through the desuccinylation and activation of HMGCS2. Has weak NAD-dependent protein deacetylase activity; however this activity may not be physiologically relevant in vivo. Can deacetylate cytochrome c (CYCS) and a number of other proteins in vitro such as UOX. This is NAD-dependent protein deacylase sirtuin-5, mitochondrial from Canis lupus familiaris (Dog).